We begin with the raw amino-acid sequence, 517 residues long: Cytochrome P450 78A5 (517 aa).

A helical transmembrane segment spans residues 20–40 (AFASVSLIIATVAFLLSPGGL). C459 is a binding site for heme.

Belongs to the cytochrome P450 family. The cofactor is heme. As to expression, expressed in the periphery of the shoot apical meristem and inflorescence meristem, on the adaxial sides of developing floral organs and in developing ovules in the region where the integuments emerge.

Its subcellular location is the membrane. Functionally, plays a role in regulating directional growth at the meristem/organ boundary. Is required for the promotion of leaf and floral organ growth and for the prolongation of the plastochron. Promotes organ growth in a non-cell-autonomous manner and may generate a mobile growth signal distinct from the classical phytohormones that prevents premature arrest of proliferation, until the correct primordium size has been reached. Functions probably in association with CYP78A7 in regulating relative growth of the shoot apical meristem and plant organs. Is required locally in developing ovules to stimulates cell proliferation and promote seed growth. The polypeptide is Cytochrome P450 78A5 (CYP78A5) (Arabidopsis thaliana (Mouse-ear cress)).